We begin with the raw amino-acid sequence, 31 residues long: Cytochrome b6-f complex subunit 6 (31 aa).

A helical transmembrane segment spans residues 4–24 (ITSYFGFLLAALTITSALFIG).

This sequence belongs to the PetL family. As to quaternary structure, the 4 large subunits of the cytochrome b6-f complex are cytochrome b6, subunit IV (17 kDa polypeptide, PetD), cytochrome f and the Rieske protein, while the 4 small subunits are PetG, PetL, PetM and PetN. The complex functions as a dimer.

It localises to the plastid. It is found in the chloroplast thylakoid membrane. Component of the cytochrome b6-f complex, which mediates electron transfer between photosystem II (PSII) and photosystem I (PSI), cyclic electron flow around PSI, and state transitions. PetL is important for photoautotrophic growth as well as for electron transfer efficiency and stability of the cytochrome b6-f complex. This Gossypium hirsutum (Upland cotton) protein is Cytochrome b6-f complex subunit 6.